The primary structure comprises 1340 residues: Pleckstrin homology domain-containing family G member 2 (1340 aa).

Residues 34–44 (TPTAQAATTMA) are compositionally biased toward polar residues. Residues 34–76 (TPTAQAATTMASPRGSGSSTSLSTVGSEGDPSPACSASRPEPL) form a disordered region. Positions 45-62 (SPRGSGSSTSLSTVGSEG) are enriched in low complexity. A DH domain is found at 98–279 (RLERVAREIV…TAVAWYINDM (182 aa)). Residues 309–407 (ELVLEGTFRG…WIHCLQRLFF (99 aa)) form the PH domain. 7 disordered regions span residues 431 to 623 (PKSK…IPCI), 684 to 743 (LPGP…SVQG), 820 to 855 (MQRAETRASTNAPRRRPRVLAQPQPSPCPPQEEAEP), 907 to 979 (NVSD…PSAG), 991 to 1028 (TTSLPGQECQADTVALSKQEGHEDSQNPNKAPGAEQRD), 1047 to 1069 (PVCTSSPDQQIPATTPLPLSTDF), and 1125 to 1146 (PLSSHKQEDAPECLGPEPSLTD). Thr-441 bears the Phosphothreonine mark. Ser-446 and Ser-465 each carry phosphoserine. Residues 560–572 (DIPKFPRDSRVPV) show a composition bias toward basic and acidic residues. Residues 588-600 (SEEEEEEDLETDE) show a composition bias toward acidic residues. 5 stretches are compositionally biased toward polar residues: residues 703–714 (SGSNPGRLSESP), 820–831 (MQRAETRASTNA), 907–921 (NVSDLSKQGHLSSNS), 930–945 (GQSNFQNIQVPSTSLL), and 956–972 (PTASTLPDTSQLQSQVP). Residues 1049 to 1059 (CTSSPDQQIPA) are compositionally biased toward polar residues. A Phosphothreonine modification is found at Thr-1215. 2 positions are modified to phosphoserine: Ser-1219 and Ser-1269. Residues 1250 to 1340 (RRQGPGGEGT…VGPSQGPGGS (91 aa)) are disordered. A compositionally biased stretch (pro residues) spans 1276–1288 (PSPPPQPQPPAPP). Residues 1319–1333 (HPALLAAPHPGAVGP) show a composition bias toward low complexity.

In terms of tissue distribution, expressed in thymus, skeletal muscle, lung, testis, uterus, pancreas and heart and also expressed during embryogenesis.

May be a transforming oncogene with exchange activity for CDC42. May be a guanine-nucleotide exchange factor (GEF) for RAC1 and CDC42. Activated by the binding to subunits beta and gamma of the heterotrimeric guanine nucleotide-binding protein (G protein). Involved in the regulation of actin polymerization. In Mus musculus (Mouse), this protein is Pleckstrin homology domain-containing family G member 2 (Plekhg2).